Consider the following 948-residue polypeptide: 3-hydroxy-3-methylglutaryl-coenzyme A reductase (948 aa).

A run of 6 helical transmembrane segments spans residues 9–25 (LLFFDCFSTGTFFVLLI), 55–71 (VIIFLVVFVYFIGVLTC), 96–112 (LILFTFALCSLSSVLFV), 124–140 (TSVFLLFSDLSVFFIVL), 207–223 (IIYIMIVFVFLPSFMRI), and 286–302 (CWSTTFVIFVSLIILHL). The N-linked (GlcNAc...) asparagine glycan is linked to Asn-316. A helical transmembrane segment spans residues 347-363 (VINANLVVYLFLGLFLF). Residues 364–466 (KRIRLNKPIN…MLTEKIKQGL (103 aa)) form a linker region. Asn-430 is a glycosylation site (N-linked (GlcNAc...) asparagine). Positions 467-948 (GHELSDTEIL…VNPEISHYTM (482 aa)) are catalytic. Active-site charge relay system residues include Glu-567, Lys-699, and Asp-777. The active-site Proton donor is His-869. N-linked (GlcNAc...) asparagine glycosylation is present at Asn-895.

It belongs to the HMG-CoA reductase family.

It localises to the endoplasmic reticulum membrane. Its subcellular location is the peroxisome membrane. It carries out the reaction (R)-mevalonate + 2 NADP(+) + CoA = (3S)-3-hydroxy-3-methylglutaryl-CoA + 2 NADPH + 2 H(+). The protein operates within metabolic intermediate biosynthesis; (R)-mevalonate biosynthesis; (R)-mevalonate from acetyl-CoA: step 3/3. Functionally, this transmembrane glycoprotein is involved in the control of cholesterol and nonsterol isoprenoid compounds biosynthesis. It is the rate-limiting enzyme of sterol biosynthesis. This chain is 3-hydroxy-3-methylglutaryl-coenzyme A reductase, found in Schistosoma mansoni (Blood fluke).